Consider the following 176-residue polypeptide: Crossover junction endodeoxyribonuclease RuvC (176 aa).

Catalysis depends on residues aspartate 7, glutamate 67, and aspartate 139. Residues aspartate 7, glutamate 67, and aspartate 139 each coordinate Mg(2+).

Belongs to the RuvC family. In terms of assembly, homodimer which binds Holliday junction (HJ) DNA. The HJ becomes 2-fold symmetrical on binding to RuvC with unstacked arms; it has a different conformation from HJ DNA in complex with RuvA. In the full resolvosome a probable DNA-RuvA(4)-RuvB(12)-RuvC(2) complex forms which resolves the HJ. Requires Mg(2+) as cofactor.

The protein resides in the cytoplasm. The catalysed reaction is Endonucleolytic cleavage at a junction such as a reciprocal single-stranded crossover between two homologous DNA duplexes (Holliday junction).. The RuvA-RuvB-RuvC complex processes Holliday junction (HJ) DNA during genetic recombination and DNA repair. Endonuclease that resolves HJ intermediates. Cleaves cruciform DNA by making single-stranded nicks across the HJ at symmetrical positions within the homologous arms, yielding a 5'-phosphate and a 3'-hydroxyl group; requires a central core of homology in the junction. The consensus cleavage sequence is 5'-(A/T)TT(C/G)-3'. Cleavage occurs on the 3'-side of the TT dinucleotide at the point of strand exchange. HJ branch migration catalyzed by RuvA-RuvB allows RuvC to scan DNA until it finds its consensus sequence, where it cleaves and resolves the cruciform DNA. The protein is Crossover junction endodeoxyribonuclease RuvC of Pelobacter propionicus (strain DSM 2379 / NBRC 103807 / OttBd1).